The following is a 1076-amino-acid chain: Cytadherence high molecular weight protein 3 (1076 aa).

The tract at residues 264–284 (QGYDQGYDQQYDQQGYDQQGY) is fibronectin-binding. A compositionally biased stretch (low complexity) spans 326–335 (QQPVEVAKPA). The disordered stretch occupies residues 326-351 (QQPVEVAKPAPTKPVGPKPQPGKKAT). Residues 336–345 (PTKPVGPKPQ) show a composition bias toward pro residues. The stretch at 562-616 (EITKLEELVEIKTDNTESLNKLETLIDENKKIIDQFKQLKEEAKKSNSNINLEKV) forms a coiled coil. Disordered regions lie at residues 789–808 (SREH…TTRI) and 850–873 (RINP…EQQP). Polar residues predominate over residues 797–806 (PKAQHQQPTT). Over residues 862–873 (YEQPDPYQEQQP) the composition is skewed to low complexity.

The protein resides in the cell projection. It is found in the attachment organelle membrane. Functionally, binds immobilized fibronectin. In terms of biological role, component of the cytoskeleton-like structure which stabilizes the shape of the wall-less mycoplasma. This cytoskeleton-like network of accessory proteins containing HMW proteins 1 to 5 allows the proper anchoring of cytadhesin proteins in the mycoplasmal membrane at the attachment organelle. Essential for successful surface parasitism. The polypeptide is Cytadherence high molecular weight protein 3 (hlp3) (Mycoplasmoides gallisepticum (strain R(low / passage 15 / clone 2)) (Mycoplasma gallisepticum)).